The sequence spans 462 residues: L-seryl-tRNA(Sec) selenium transferase (462 aa).

An N6-(pyridoxal phosphate)lysine modification is found at K292.

The protein belongs to the SelA family. Pyridoxal 5'-phosphate is required as a cofactor.

The protein localises to the cytoplasm. The catalysed reaction is L-seryl-tRNA(Sec) + selenophosphate + H(+) = L-selenocysteinyl-tRNA(Sec) + phosphate. It functions in the pathway aminoacyl-tRNA biosynthesis; selenocysteinyl-tRNA(Sec) biosynthesis; selenocysteinyl-tRNA(Sec) from L-seryl-tRNA(Sec) (bacterial route): step 1/1. Converts seryl-tRNA(Sec) to selenocysteinyl-tRNA(Sec) required for selenoprotein biosynthesis. The polypeptide is L-seryl-tRNA(Sec) selenium transferase (Clostridium perfringens (strain ATCC 13124 / DSM 756 / JCM 1290 / NCIMB 6125 / NCTC 8237 / Type A)).